The following is a 126-amino-acid chain: NADH-quinone oxidoreductase subunit A (126 aa).

The next 3 membrane-spanning stretches (helical) occupy residues 14–34 (FLYFIFFSLFFCCFMLFTSWF), 66–86 (FYLIAIFFVIFDVEALYLYAW), and 96–116 (IGFVEATIFILFLLLSLFYLV).

This sequence belongs to the complex I subunit 3 family. In terms of assembly, NDH-1 is composed of 13 different subunits. Subunits NuoA, H, J, K, L, M, N constitute the membrane sector of the complex.

The protein localises to the cell membrane. It carries out the reaction a quinone + NADH + 5 H(+)(in) = a quinol + NAD(+) + 4 H(+)(out). NDH-1 shuttles electrons from NADH, via FMN and iron-sulfur (Fe-S) centers, to quinones in the respiratory chain. The immediate electron acceptor for the enzyme in this species is believed to be ubiquinone. Couples the redox reaction to proton translocation (for every two electrons transferred, four hydrogen ions are translocated across the cytoplasmic membrane), and thus conserves the redox energy in a proton gradient. The polypeptide is NADH-quinone oxidoreductase subunit A (Buchnera aphidicola subsp. Schizaphis graminum (strain Sg)).